A 664-amino-acid polypeptide reads, in one-letter code: Translation factor GUF1, mitochondrial (664 aa).

One can recognise a tr-type G domain in the interval 63–246 (SNYRNFSIVA…SIINNIPPPQ (184 aa)). GTP-binding positions include 72–79 (AHVDHGKS), 139–143 (DTPGH), and 193–196 (NKID).

This sequence belongs to the TRAFAC class translation factor GTPase superfamily. Classic translation factor GTPase family. LepA subfamily.

It is found in the mitochondrion inner membrane. It catalyses the reaction GTP + H2O = GDP + phosphate + H(+). Its function is as follows. Promotes mitochondrial protein synthesis. May act as a fidelity factor of the translation reaction, by catalyzing a one-codon backward translocation of tRNAs on improperly translocated ribosomes. Binds to mitochondrial ribosomes in a GTP-dependent manner. This chain is Translation factor GUF1, mitochondrial, found in Clavispora lusitaniae (strain ATCC 42720) (Yeast).